Here is a 303-residue protein sequence, read N- to C-terminus: Glycine--tRNA ligase alpha subunit (303 aa).

The protein belongs to the class-II aminoacyl-tRNA synthetase family. In terms of assembly, tetramer of two alpha and two beta subunits.

The protein resides in the cytoplasm. The enzyme catalyses tRNA(Gly) + glycine + ATP = glycyl-tRNA(Gly) + AMP + diphosphate. This Escherichia fergusonii (strain ATCC 35469 / DSM 13698 / CCUG 18766 / IAM 14443 / JCM 21226 / LMG 7866 / NBRC 102419 / NCTC 12128 / CDC 0568-73) protein is Glycine--tRNA ligase alpha subunit.